The following is a 205-amino-acid chain: Probable calcium-binding protein CML41 (205 aa).

The segment at 26–55 (SFQNRRRSPKSNSSSTLNSPRSNSDDNNNI) is disordered. Residues 35 to 54 (KSNSSSTLNSPRSNSDDNNN) are compositionally biased toward low complexity. EF-hand domains are found at residues 60–95 (ASKE…VGEY), 96–131 (ISHE…RDLY), 137–173 (DGDG…LGES), and 174–205 (RTYG…MMTV). Aspartate 73, aspartate 75, aspartate 77, lysine 79, glutamate 84, aspartate 109, aspartate 111, aspartate 113, serine 115, and aspartate 120 together coordinate Ca(2+). Residues aspartate 187, aspartate 189, asparagine 191, and glutamate 198 each contribute to the Ca(2+) site.

Functionally, potential calcium sensor. This chain is Probable calcium-binding protein CML41 (CML41), found in Arabidopsis thaliana (Mouse-ear cress).